Consider the following 229-residue polypeptide: Orotate phosphoribosyltransferase (229 aa).

5-phospho-alpha-D-ribose 1-diphosphate-binding positions include Arg-107, Lys-108, Lys-111, His-113, and 133–141 (EDLTTAGGS). Residue Thr-137 coordinates orotate.

It belongs to the purine/pyrimidine phosphoribosyltransferase family. PyrE subfamily. In terms of assembly, homodimer. Mg(2+) serves as cofactor.

It carries out the reaction orotidine 5'-phosphate + diphosphate = orotate + 5-phospho-alpha-D-ribose 1-diphosphate. The protein operates within pyrimidine metabolism; UMP biosynthesis via de novo pathway; UMP from orotate: step 1/2. Functionally, catalyzes the transfer of a ribosyl phosphate group from 5-phosphoribose 1-diphosphate to orotate, leading to the formation of orotidine monophosphate (OMP). This is Orotate phosphoribosyltransferase from Rhizobium etli (strain CIAT 652).